The sequence spans 451 residues: Glycine--tRNA ligase (451 aa).

Residues arginine 101 and glutamate 151 each coordinate substrate. Residues 183-185 (RNE), 193-198 (FRTCEF), 267-268 (EL), and 312-315 (GLTR) contribute to the ATP site. A substrate-binding site is contributed by 198–202 (FEQME). Substrate is bound at residue 308 to 312 (ETSAG).

It belongs to the class-II aminoacyl-tRNA synthetase family. In terms of assembly, homodimer.

The protein resides in the cytoplasm. It catalyses the reaction tRNA(Gly) + glycine + ATP = glycyl-tRNA(Gly) + AMP + diphosphate. In terms of biological role, catalyzes the attachment of glycine to tRNA(Gly). The sequence is that of Glycine--tRNA ligase from Treponema denticola (strain ATCC 35405 / DSM 14222 / CIP 103919 / JCM 8153 / KCTC 15104).